The sequence spans 989 residues: Translation initiation factor IF-2 (989 aa).

Disordered stretches follow at residues Lys43 to Arg219 and Glu234 to Arg379. Residues Asn72–Asn87 are compositionally biased toward polar residues. Residues Pro105 to Ala146 show a composition bias toward low complexity. Residues Val149–Glu159 are compositionally biased toward basic and acidic residues. Polar residues predominate over residues Lys160 to Ser171. Basic and acidic residues predominate over residues Glu234 to Lys293. A compositionally biased stretch (low complexity) spans Ala294–Ala303. Positions Pro342–Gln361 are enriched in basic and acidic residues. Residues Ser489–Lys659 enclose the tr-type G domain. The segment at Gly498–Thr505 is G1. Gly498–Thr505 contacts GTP. The tract at residues Gly523 to His527 is G2. The interval Asp545 to Gly548 is G3. Residues Asp545–His549 and Asn599–Asp602 each bind GTP. Residues Asn599–Asp602 form a G4 region. Residues Ser635–Ala637 form a G5 region.

This sequence belongs to the TRAFAC class translation factor GTPase superfamily. Classic translation factor GTPase family. IF-2 subfamily.

The protein resides in the cytoplasm. One of the essential components for the initiation of protein synthesis. Protects formylmethionyl-tRNA from spontaneous hydrolysis and promotes its binding to the 30S ribosomal subunits. Also involved in the hydrolysis of GTP during the formation of the 70S ribosomal complex. This chain is Translation initiation factor IF-2, found in Zymomonas mobilis subsp. mobilis (strain ATCC 31821 / ZM4 / CP4).